The chain runs to 370 residues: Glutamate 5-kinase (370 aa).

ATP is bound at residue Lys17. Substrate is bound by residues Ser56, Asp143, and Asn155. 175-176 serves as a coordination point for ATP; the sequence is SD. Positions 280–357 constitute a PUA domain; sequence KGEITVDAGA…DEIEGILGYP (78 aa).

Belongs to the glutamate 5-kinase family.

It localises to the cytoplasm. It carries out the reaction L-glutamate + ATP = L-glutamyl 5-phosphate + ADP. The protein operates within amino-acid biosynthesis; L-proline biosynthesis; L-glutamate 5-semialdehyde from L-glutamate: step 1/2. In terms of biological role, catalyzes the transfer of a phosphate group to glutamate to form L-glutamate 5-phosphate. This Paracoccus denitrificans (strain Pd 1222) protein is Glutamate 5-kinase.